A 498-amino-acid polypeptide reads, in one-letter code: Glycerol kinase (498 aa).

Residue Thr14 coordinates ADP. Thr14, Thr15, and Ser16 together coordinate ATP. Sn-glycerol 3-phosphate is bound at residue Thr14. Arg18 lines the ADP pocket. Arg84, Glu85, Tyr136, and Asp245 together coordinate sn-glycerol 3-phosphate. The glycerol site is built by Arg84, Glu85, Tyr136, Asp245, and Gln246. 2 residues coordinate ADP: Thr267 and Gly310. The ATP site is built by Thr267, Gly310, Gln314, and Gly410. ADP-binding residues include Gly410 and Asn414.

The protein belongs to the FGGY kinase family.

The enzyme catalyses glycerol + ATP = sn-glycerol 3-phosphate + ADP + H(+). The protein operates within polyol metabolism; glycerol degradation via glycerol kinase pathway; sn-glycerol 3-phosphate from glycerol: step 1/1. With respect to regulation, inhibited by fructose 1,6-bisphosphate (FBP). In terms of biological role, key enzyme in the regulation of glycerol uptake and metabolism. Catalyzes the phosphorylation of glycerol to yield sn-glycerol 3-phosphate. The protein is Glycerol kinase of Rhodospirillum centenum (strain ATCC 51521 / SW).